Here is a 92-residue protein sequence, read N- to C-terminus: Small ribosomal subunit protein uS19c (92 aa).

It belongs to the universal ribosomal protein uS19 family.

The protein resides in the plastid. Its subcellular location is the chloroplast. Protein S19 forms a complex with S13 that binds strongly to the 16S ribosomal RNA. This chain is Small ribosomal subunit protein uS19c, found in Manihot esculenta (Cassava).